The primary structure comprises 606 residues: Threonine--tRNA ligase (606 aa).

The catalytic stretch occupies residues 212–503; it reads DHRKLGVEMK…LLEHTAGELP (292 aa). Positions 304, 355, and 480 each coordinate Zn(2+).

It belongs to the class-II aminoacyl-tRNA synthetase family. As to quaternary structure, homodimer. Zn(2+) is required as a cofactor.

Its subcellular location is the cytoplasm. The enzyme catalyses tRNA(Thr) + L-threonine + ATP = L-threonyl-tRNA(Thr) + AMP + diphosphate + H(+). In terms of biological role, catalyzes the attachment of threonine to tRNA(Thr) in a two-step reaction: L-threonine is first activated by ATP to form Thr-AMP and then transferred to the acceptor end of tRNA(Thr). Also edits incorrectly charged L-seryl-tRNA(Thr). In Campylobacter concisus (strain 13826), this protein is Threonine--tRNA ligase.